The following is a 71-amino-acid chain: ATP synthase F(0) complex subunit e, mitochondrial (71 aa).

N6-acetyllysine is present on K34. At S68 the chain carries Phosphoserine.

It belongs to the ATPase e subunit family. Component of the ATP synthase complex composed at least of ATP5F1A/subunit alpha, ATP5F1B/subunit beta, ATP5MC1/subunit c (homooctomer), MT-ATP6/subunit a, MT-ATP8/subunit 8, ATP5ME/subunit e, ATP5MF/subunit f, ATP5MG/subunit g, ATP5MK/subunit k, ATP5MJ/subunit j, ATP5F1C/subunit gamma, ATP5F1D/subunit delta, ATP5F1E/subunit epsilon, ATP5PF/subunit F6, ATP5PB/subunit b, ATP5PD/subunit d, ATP5PO/subunit OSCP. ATP synthase complex consists of a soluble F(1) head domain (subunits alpha(3) and beta(3)) - the catalytic core - and a membrane F(0) domain - the membrane proton channel (subunits c, a, 8, e, f, g, k and j). These two domains are linked by a central stalk (subunits gamma, delta, and epsilon) rotating inside the F1 region and a stationary peripheral stalk (subunits F6, b, d, and OSCP). Mammary gland, liver, kidney, heart, spleen, brain and lung.

The protein localises to the mitochondrion. The protein resides in the mitochondrion inner membrane. Subunit e, of the mitochondrial membrane ATP synthase complex (F(1)F(0) ATP synthase or Complex V) that produces ATP from ADP in the presence of a proton gradient across the membrane which is generated by electron transport complexes of the respiratory chain. ATP synthase complex consist of a soluble F(1) head domain - the catalytic core - and a membrane F(1) domain - the membrane proton channel. These two domains are linked by a central stalk rotating inside the F(1) region and a stationary peripheral stalk. During catalysis, ATP synthesis in the catalytic domain of F(1) is coupled via a rotary mechanism of the central stalk subunits to proton translocation. In vivo, can only synthesize ATP although its ATP hydrolase activity can be activated artificially in vitro. Part of the complex F(0) domain. This is ATP synthase F(0) complex subunit e, mitochondrial from Mus musculus (Mouse).